The sequence spans 144 residues: Prefoldin subunit alpha (144 aa).

It belongs to the prefoldin subunit alpha family. In terms of assembly, heterohexamer of two alpha and four beta subunits.

Its subcellular location is the cytoplasm. In terms of biological role, molecular chaperone capable of stabilizing a range of proteins. Seems to fulfill an ATP-independent, HSP70-like function in archaeal de novo protein folding. This is Prefoldin subunit alpha from Methanococcus maripaludis (strain DSM 14266 / JCM 13030 / NBRC 101832 / S2 / LL).